Here is a 276-residue protein sequence, read N- to C-terminus: SRR1-like protein (276 aa).

Ser-30 is modified (phosphoserine). Tyr-34 is subject to Phosphotyrosine.

Belongs to the SRR1 family.

Its function is as follows. Possible regulator involved in a circadian clock input pathway. The protein is SRR1-like protein of Drosophila melanogaster (Fruit fly).